An 876-amino-acid chain; its full sequence is Valine--tRNA ligase (876 aa).

Residues 44-54 carry the 'HIGH' region motif; that stretch reads PNVTGKLHLGH. The short motif at 520–524 is the 'KMSKS' region element; that stretch reads KMSKS. Lys523 provides a ligand contact to ATP. Residues 806-876 are a coiled coil; the sequence is EGLIDMDKEI…VKLRINQLKA (71 aa).

This sequence belongs to the class-I aminoacyl-tRNA synthetase family. ValS type 1 subfamily. In terms of assembly, monomer.

The protein resides in the cytoplasm. The enzyme catalyses tRNA(Val) + L-valine + ATP = L-valyl-tRNA(Val) + AMP + diphosphate. Its function is as follows. Catalyzes the attachment of valine to tRNA(Val). As ValRS can inadvertently accommodate and process structurally similar amino acids such as threonine, to avoid such errors, it has a 'posttransfer' editing activity that hydrolyzes mischarged Thr-tRNA(Val) in a tRNA-dependent manner. This is Valine--tRNA ligase from Staphylococcus saprophyticus subsp. saprophyticus (strain ATCC 15305 / DSM 20229 / NCIMB 8711 / NCTC 7292 / S-41).